We begin with the raw amino-acid sequence, 288 residues long: MILKLNFCLSTYSVLILLSLSTQAFAANQAKTKVVPSSTISTKSLKNGISEQVEGSANIPGRLADIEVNGSGYPTDDEDGDDVHGSGKPPSSATTKSDKVTSPSHAVVTAKPTTVPTTTASFKPPVQPKPKPAANDKEIKVEEDEDDDEDEDEDDEDDEEDFADENIHNDEDFFTTTTTTTYRPIVVATTSTPRSAATNPPRQQPPMVTSTISSGPFSPFHETLANGFYAAIAGGVLVAVITAILLVLFVVFRIRKKDEGSYALDEPKQARPYASYGYTKASTKEFYA.

The N-terminal stretch at 1-26 is a signal peptide; the sequence is MILKLNFCLSTYSVLILLSLSTQAFA. Residues 27-231 are Extracellular-facing; that stretch reads ANQAKTKVVP…ETLANGFYAA (205 aa). The interval 67 to 175 is disordered; sequence EVNGSGYPTD…NIHNDEDFFT (109 aa). A glycan (N-linked (GlcNAc...) asparagine) is linked at asparagine 69. 2 O-linked (Xyl...) (glycosaminoglycan) serine glycosylation sites follow: serine 71 and serine 86. Over residues 89 to 104 the composition is skewed to polar residues; sequence PPSSATTKSDKVTSPS. Residues 106 to 124 are compositionally biased toward low complexity; it reads AVVTAKPTTVPTTTASFKP. Positions 141–164 are enriched in acidic residues; the sequence is VEEDEDDDEDEDEDDEDDEEDFAD. O-linked (Xyl...) (glycosaminoglycan) serine glycosylation is present at serine 214. The helical transmembrane segment at 232 to 252 threads the bilayer; the sequence is IAGGVLVAVITAILLVLFVVF. Residues 253–288 are Cytoplasmic-facing; it reads RIRKKDEGSYALDEPKQARPYASYGYTKASTKEFYA.

It belongs to the syndecan proteoglycan family.

It localises to the membrane. Its subcellular location is the cell surface. The protein localises to the cell junction. It is found in the cytoplasm. In terms of biological role, cell surface proteoglycan that bears heparan sulfate. Required for correct mitotic spindle orientation of the ABar blastomere division plane and this may be through modulation of astral microtubule array, and in association with the wnt-signaling proteins mig-5 and dsh-2. Involved in the migration of AQR and PQR neurons, which descend from the Q neuroblasts. Promotes the axon guidance of D-type motor neurons. The protein is Probable syndecan of Caenorhabditis elegans.